Reading from the N-terminus, the 423-residue chain is Polyglutamylase complex subunit TTLL1 (423 aa).

The TTL domain maps to 1–367; that stretch reads MAGKVKWVTD…NGEIPDCKWN (367 aa). Residues lysine 138, 144-145, 181-184, and 194-196 each bind ATP; these read QG, SLYI, and KFD. Glutamine 144 is a binding site for a protein. Arginine 220 contributes to the L-glutamate binding site. An ATP-binding site is contributed by 241 to 242; the sequence is TN. Lysine 259 contacts L-glutamate. Mg(2+) contacts are provided by aspartate 313, glutamate 326, and asparagine 328. Lysine 344 serves as a coordination point for L-glutamate. The interval 391 to 423 is disordered; sequence GAERELRSRPGQSLGPKGSRLRDAGRTVLTTWK.

Belongs to the tubulin polyglutamylase family. As to quaternary structure, part of the neuronal tubulin polyglutamylase complex which contains TPGS1, TPGS2, TTLL1, LRRC49 and NICN1. Interacts with PCM1, CSTPP1 and LRRC49. Requires Mg(2+) as cofactor.

It is found in the cytoplasm. It localises to the cytoskeleton. The protein localises to the cilium basal body. The protein resides in the cilium axoneme. Its subcellular location is the cell projection. It is found in the cilium. It localises to the flagellum. The enzyme catalyses (L-glutamyl)(n)-gamma-L-glutamyl-L-glutamyl-[protein] + L-glutamate + ATP = (L-glutamyl)(n+1)-gamma-L-glutamyl-L-glutamyl-[protein] + ADP + phosphate + H(+). Catalytic subunit of a polyglutamylase complex which modifies tubulin, generating side chains of glutamate on the gamma-carboxyl group of specific glutamate residues within the C-terminal tail of tubulin. Probably involved in the side-chain elongation step of the polyglutamylation reaction rather than the initiation step. Modifies both alpha- and beta-tubulins with a preference for the alpha-tail. Unlike most polyglutamylases of the tubulin--tyrosine ligase family, only displays a catalytic activity when in complex with other proteins as it is most likely lacking domains important for autonomous activity. Part of the neuronal tubulin polyglutamylase complex. Mediates cilia and flagella polyglutamylation which is essential for their biogenesis and motility. Involved in respiratory motile cilia function through the regulation of beating asymmetry. Essential for sperm flagella biogenesis, motility and male fertility. Involved in KLF4 glutamylation which impedes its ubiquitination, thereby leading to somatic cell reprogramming, pluripotency maintenance and embryogenesis. This Bos taurus (Bovine) protein is Polyglutamylase complex subunit TTLL1 (TTLL1).